The primary structure comprises 331 residues: MTTIRDVAKHAKVSVATVSRVLNKKGYVSKEAEEAVLQAIKELNYQPSSVARSLYHKTSGMIGLLIPDISNPFFPELARAVEDVASTYGYTVVLCNTDEEIEKERKYLQALKQKYVDGVILTTSFLPYKEYEQLNIPMVALDRYVNENIPLVASQNKAGARLATEHLLEQGCQFIAHIRGPKGVTPAEDRYEGFKEVVEEQEVANIVVSADFHIDEAQKVTRALLETHPTIDGIFASSDVVAAGAMKAAHMMGKRIPDDLQIVGFDGIPLGNMLVPSLTTVEQPIYDLGAVSTRLLIKQIEKKPLDTYRYEIPTKLVVRETTKGGENSENA.

In terms of domain architecture, HTH lacI-type spans 1–56; sequence MTTIRDVAKHAKVSVATVSRVLNKKGYVSKEAEEAVLQAIKELNYQPSSVARSLYH. The H-T-H motif DNA-binding region spans 4-23; the sequence is IRDVAKHAKVSVATVSRVLN.

Transcriptional repressor for the ribose rbsDACBK operon. This is Ribose operon repressor (rbsR) from Halalkalibacterium halodurans (strain ATCC BAA-125 / DSM 18197 / FERM 7344 / JCM 9153 / C-125) (Bacillus halodurans).